Consider the following 530-residue polypeptide: GMP synthase [glutamine-hydrolyzing] (530 aa).

Positions 18–207 (TILVLDFGSQ…AVDICQAKTN (190 aa)) constitute a Glutamine amidotransferase type-1 domain. The active-site Nucleophile is the Cys94. Active-site residues include His181 and Glu183. Residues 208-405 (WSMENFIDTE…LGVPEDLVWR (198 aa)) form the GMPS ATP-PPase domain. ATP is bound at residue 236–242 (SGGVDST). Residues Arg309, Asp467, Lys522, and Glu528 each contribute to the XMP site.

As to quaternary structure, homodimer. Requires Mg(2+) as cofactor.

It is found in the cytoplasm. The protein resides in the cytosol. The catalysed reaction is XMP + L-glutamine + ATP + H2O = GMP + L-glutamate + AMP + diphosphate + 2 H(+). It participates in purine metabolism; GMP biosynthesis; GMP from XMP (L-Gln route): step 1/1. In terms of biological role, catalyzes the conversion of xanthine monophosphate (XMP) to GMP in the presence of glutamine and ATP through an adenyl-XMP intermediate. The chain is GMP synthase [glutamine-hydrolyzing] (GUA1) from Candida albicans (strain SC5314 / ATCC MYA-2876) (Yeast).